The primary structure comprises 685 residues: ATP-dependent zinc metalloprotease FTSH 8, chloroplastic (685 aa).

Residues 1 to 37 constitute a chloroplast transit peptide; the sequence is MAASSACLLGNGLSVYTTKQRFQKLGLDRTSKVTVVK. The transit peptide at 38–73 directs the protein to the thylakoid; sequence ASLDEKKHEGRRGFFKLLLGNAAAGVGLLASGNANA. The Lumenal, thylakoid portion of the chain corresponds to 38-161; it reads ASLDEKKHEG…HNAQEDQGSP (124 aa). The helical transmembrane segment at 162-182 threads the bilayer; it reads ILNLIGNLAFPVILIGGLFLL. Residues 183–685 lie on the Stromal side of the membrane; that stretch reads SRRSSGGMGG…STSTPTPASV (503 aa). Residue 260 to 267 participates in ATP binding; the sequence is GPPGTGKT. A Zn(2+)-binding site is contributed by H481. Residue E482 is part of the active site. The Zn(2+) site is built by H485 and D559.

It in the N-terminal section; belongs to the AAA ATPase family. The protein in the C-terminal section; belongs to the peptidase M41 family. Heterohexamers with FTSH1, FTSH2 and FTSH5. May also form homooligomers. Zn(2+) serves as cofactor. In terms of tissue distribution, expressed in cotyledons, cauline and rosette leaves, stems, sepals, flovers and siliques. Very low in roots.

Its subcellular location is the plastid. The protein localises to the chloroplast thylakoid membrane. Its function is as follows. Part of a complex that function as an ATP-dependent zinc metallopeptidase. Involved in the thylakoid formation and in the removal of damaged D1 in the photosystem II, preventing cell death under high-intensity light conditions. The protein is ATP-dependent zinc metalloprotease FTSH 8, chloroplastic (FTSH8) of Arabidopsis thaliana (Mouse-ear cress).